The following is a 206-amino-acid chain: Small ribosomal subunit protein uS2 (206 aa).

It belongs to the universal ribosomal protein uS2 family.

The polypeptide is Small ribosomal subunit protein uS2 (Pyrobaculum neutrophilum (strain DSM 2338 / JCM 9278 / NBRC 100436 / V24Sta) (Thermoproteus neutrophilus)).